The following is a 336-amino-acid chain: tRNA-cytidine(32) 2-sulfurtransferase (336 aa).

The disordered stretch occupies residues 1 to 34 (MNAPEILNGAATASPADATEATQTAARAKTPLTR). Low complexity predominate over residues 10–22 (AATASPADATEAT). The short motif at 75–80 (SGGKDS) is the PP-loop motif element. Residues Cys150, Cys153, and Cys241 each coordinate [4Fe-4S] cluster.

It belongs to the TtcA family. Homodimer. Requires Mg(2+) as cofactor. [4Fe-4S] cluster is required as a cofactor.

Its subcellular location is the cytoplasm. The enzyme catalyses cytidine(32) in tRNA + S-sulfanyl-L-cysteinyl-[cysteine desulfurase] + AH2 + ATP = 2-thiocytidine(32) in tRNA + L-cysteinyl-[cysteine desulfurase] + A + AMP + diphosphate + H(+). Its pathway is tRNA modification. Functionally, catalyzes the ATP-dependent 2-thiolation of cytidine in position 32 of tRNA, to form 2-thiocytidine (s(2)C32). The sulfur atoms are provided by the cysteine/cysteine desulfurase (IscS) system. This is tRNA-cytidine(32) 2-sulfurtransferase from Paraburkholderia phytofirmans (strain DSM 17436 / LMG 22146 / PsJN) (Burkholderia phytofirmans).